The primary structure comprises 430 residues: Glutamate-1-semialdehyde 2,1-aminomutase (430 aa).

N6-(pyridoxal phosphate)lysine is present on lysine 268.

It belongs to the class-III pyridoxal-phosphate-dependent aminotransferase family. HemL subfamily. In terms of assembly, homodimer. Requires pyridoxal 5'-phosphate as cofactor.

It is found in the cytoplasm. It catalyses the reaction (S)-4-amino-5-oxopentanoate = 5-aminolevulinate. The protein operates within porphyrin-containing compound metabolism; protoporphyrin-IX biosynthesis; 5-aminolevulinate from L-glutamyl-tRNA(Glu): step 2/2. The sequence is that of Glutamate-1-semialdehyde 2,1-aminomutase (hemL) from Bacillus subtilis (strain 168).